Reading from the N-terminus, the 264-residue chain is S-adenosylmethionine decarboxylase proenzyme (264 aa).

The Schiff-base intermediate with substrate; via pyruvic acid role is filled by Ser112. Ser112 is modified (pyruvic acid (Ser); by autocatalysis). His117 functions as the Proton acceptor; for processing activity in the catalytic mechanism. Cys140 acts as the Proton donor; for catalytic activity in catalysis.

It belongs to the prokaryotic AdoMetDC family. Type 2 subfamily. Heterooctamer of four alpha and four beta chains arranged as a tetramer of alpha/beta heterodimers. It depends on pyruvate as a cofactor. In terms of processing, is synthesized initially as an inactive proenzyme. Formation of the active enzyme involves a self-maturation process in which the active site pyruvoyl group is generated from an internal serine residue via an autocatalytic post-translational modification. Two non-identical subunits are generated from the proenzyme in this reaction, and the pyruvate is formed at the N-terminus of the alpha chain, which is derived from the carboxyl end of the proenzyme. The post-translation cleavage follows an unusual pathway, termed non-hydrolytic serinolysis, in which the side chain hydroxyl group of the serine supplies its oxygen atom to form the C-terminus of the beta chain, while the remainder of the serine residue undergoes an oxidative deamination to produce ammonia and the pyruvoyl group blocking the N-terminus of the alpha chain.

It catalyses the reaction S-adenosyl-L-methionine + H(+) = S-adenosyl 3-(methylsulfanyl)propylamine + CO2. Its pathway is amine and polyamine biosynthesis; S-adenosylmethioninamine biosynthesis; S-adenosylmethioninamine from S-adenosyl-L-methionine: step 1/1. Its function is as follows. Catalyzes the decarboxylation of S-adenosylmethionine to S-adenosylmethioninamine (dcAdoMet), the propylamine donor required for the synthesis of the polyamines spermine and spermidine from the diamine putrescine. The protein is S-adenosylmethionine decarboxylase proenzyme of Cronobacter sakazakii (strain ATCC BAA-894) (Enterobacter sakazakii).